The following is a 407-amino-acid chain: Probable tRNA sulfurtransferase (407 aa).

In terms of domain architecture, THUMP spans 61–165 (NEITYRLSKI…LDAIYMYEEV (105 aa)). ATP contacts are provided by residues 183–184 (ML), 208–209 (HF), arginine 265, glycine 287, and glutamine 296.

Belongs to the ThiI family.

It is found in the cytoplasm. It carries out the reaction [ThiI sulfur-carrier protein]-S-sulfanyl-L-cysteine + a uridine in tRNA + 2 reduced [2Fe-2S]-[ferredoxin] + ATP + H(+) = [ThiI sulfur-carrier protein]-L-cysteine + a 4-thiouridine in tRNA + 2 oxidized [2Fe-2S]-[ferredoxin] + AMP + diphosphate. It catalyses the reaction [ThiS sulfur-carrier protein]-C-terminal Gly-Gly-AMP + S-sulfanyl-L-cysteinyl-[cysteine desulfurase] + AH2 = [ThiS sulfur-carrier protein]-C-terminal-Gly-aminoethanethioate + L-cysteinyl-[cysteine desulfurase] + A + AMP + 2 H(+). It participates in cofactor biosynthesis; thiamine diphosphate biosynthesis. Its function is as follows. Catalyzes the ATP-dependent transfer of a sulfur to tRNA to produce 4-thiouridine in position 8 of tRNAs, which functions as a near-UV photosensor. Also catalyzes the transfer of sulfur to the sulfur carrier protein ThiS, forming ThiS-thiocarboxylate. This is a step in the synthesis of thiazole, in the thiamine biosynthesis pathway. The sulfur is donated as persulfide by IscS. The sequence is that of Probable tRNA sulfurtransferase from Staphylococcus aureus (strain MSSA476).